The sequence spans 70 residues: ATP synthase subunit c (70 aa).

2 consecutive transmembrane segments (helical) span residues Ile-4–Ile-24 and Phe-47–Leu-67.

It belongs to the ATPase C chain family. As to quaternary structure, F-type ATPases have 2 components, F(1) - the catalytic core - and F(0) - the membrane proton channel. F(1) has five subunits: alpha(3), beta(3), gamma(1), delta(1), epsilon(1). F(0) has three main subunits: a(1), b(2) and c(10-14). The alpha and beta chains form an alternating ring which encloses part of the gamma chain. F(1) is attached to F(0) by a central stalk formed by the gamma and epsilon chains, while a peripheral stalk is formed by the delta and b chains.

Its subcellular location is the cell membrane. In terms of biological role, f(1)F(0) ATP synthase produces ATP from ADP in the presence of a proton or sodium gradient. F-type ATPases consist of two structural domains, F(1) containing the extramembraneous catalytic core and F(0) containing the membrane proton channel, linked together by a central stalk and a peripheral stalk. During catalysis, ATP synthesis in the catalytic domain of F(1) is coupled via a rotary mechanism of the central stalk subunits to proton translocation. Its function is as follows. Key component of the F(0) channel; it plays a direct role in translocation across the membrane. A homomeric c-ring of between 10-14 subunits forms the central stalk rotor element with the F(1) delta and epsilon subunits. The chain is ATP synthase subunit c from Exiguobacterium sibiricum (strain DSM 17290 / CCUG 55495 / CIP 109462 / JCM 13490 / 255-15).